Reading from the N-terminus, the 686-residue chain is Phosphatidylinositol 4,5-bisphosphate-binding protein SLM1 (686 aa).

Residues 33 to 147 form a disordered region; that stretch reads RSMTSADHAN…KQLQGKNSLT (115 aa). Positions 45-63 are enriched in low complexity; the sequence is QQQQQQQQQQQQQQQQQQQ. The segment covering 64–126 has biased composition (polar residues); sequence SASFQNGSLT…PNIDSNTNVT (63 aa). Residues 133-144 are compositionally biased toward low complexity; it reads NNNNGKQLQGKN. Phosphoserine is present on residues Ser145, Ser150, and Ser153. Low complexity predominate over residues 157–172; it reads SSLQRQRLAQQQQQQQ. Residues 157 to 176 are disordered; that stretch reads SSLQRQRLAQQQQQQQDPRS. The stretch at 296 to 381 forms a coiled coil; it reads RLEDLRRDLI…FLHEAFDNLE (86 aa). Positions 468 to 581 constitute a PH domain; it reads YEIKSGFLER…WFDNLKILTS (114 aa). The interval 626–669 is disordered; the sequence is VENDENDDINSNYVGSTVTPKLDNQTNTNTSMSSLPDTNDSELQ. The span at 634–663 shows a compositional bias: polar residues; that stretch reads INSNYVGSTVTPKLDNQTNTNTSMSSLPDT. The PXIXIT-like, required for interaction with CNA1 and CNA2, and calcineurin-dependent dephosphorylation signature appears at 673-678; the sequence is PNIYIQ.

As to quaternary structure, heterodimer of SLM1-SLM2. Binds phosphatidylinositol 4,5-bisphosphate, which is required for function. Interacts with the TORC2 subunits AVO2, BIT61 and TOR2. Interacts with the calcineurin catalytic subunits CNA1 and CNA2. Post-translationally, phosphorylated by the target of rapamycin complex 2 (TORC2) and dephosphorylated by serine/threonine-protein phosphatase 2B (calcineurin). Dephosphorylated in response to the disruption or inhibition of sphingolipid synthesis.

It is found in the cell membrane. In terms of biological role, together with SLM2, acts as an effector of the TORC2- and calcineurin-signaling pathways. Phosphorylated and activated by TORC2 under favorable growth conditions. Mediates actin polarization via inhibition of calcineurin-dependent transcription. Upon nutrient limitation or environmental stress, gets dephosphorylated by calcineurin. Dephosphorylation inhibits its interaction with TORC2, thereby antagonizing TORC2 signaling and mediating calcineurin-dependent actin depolarization. May play a role in the response to the disruption of sphingolipid synthesis, where dephosphorylation of SLM1 leads to the activation and phosphorylation of YPK1 through the TORC2 and PKH1 pathways, which in turn phosphorylates ORM1 and LAG1 to activate sphingolipid synthesis. Also functions in heat-induced, calcineurin-mediated uracil permease (FUR4) endocytosis. In Saccharomyces cerevisiae (strain ATCC 204508 / S288c) (Baker's yeast), this protein is Phosphatidylinositol 4,5-bisphosphate-binding protein SLM1 (SLM1).